Consider the following 251-residue polypeptide: tRNA (guanine-N(7)-)-methyltransferase (251 aa).

S-adenosyl-L-methionine-binding positions include Gly71, 94-95, 128-129, and Leu148; these read EL and NS. Asp151 is a catalytic residue. 226–228 contacts S-adenosyl-L-methionine; the sequence is TEE.

It belongs to the class I-like SAM-binding methyltransferase superfamily. TrmB family.

The protein resides in the nucleus. It catalyses the reaction guanosine(46) in tRNA + S-adenosyl-L-methionine = N(7)-methylguanosine(46) in tRNA + S-adenosyl-L-homocysteine. The protein operates within tRNA modification; N(7)-methylguanine-tRNA biosynthesis. Its function is as follows. Catalyzes the formation of N(7)-methylguanine at position 46 (m7G46) in tRNA. The polypeptide is tRNA (guanine-N(7)-)-methyltransferase (Arabidopsis thaliana (Mouse-ear cress)).